The primary structure comprises 343 residues: N-acetyl-gamma-glutamyl-phosphate reductase (343 aa).

The active site involves Cys-147.

It belongs to the NAGSA dehydrogenase family. Type 1 subfamily.

The protein resides in the cytoplasm. The enzyme catalyses N-acetyl-L-glutamate 5-semialdehyde + phosphate + NADP(+) = N-acetyl-L-glutamyl 5-phosphate + NADPH + H(+). Its pathway is amino-acid biosynthesis; L-arginine biosynthesis; N(2)-acetyl-L-ornithine from L-glutamate: step 3/4. Its function is as follows. Catalyzes the NADPH-dependent reduction of N-acetyl-5-glutamyl phosphate to yield N-acetyl-L-glutamate 5-semialdehyde. In Staphylococcus saprophyticus subsp. saprophyticus (strain ATCC 15305 / DSM 20229 / NCIMB 8711 / NCTC 7292 / S-41), this protein is N-acetyl-gamma-glutamyl-phosphate reductase.